Here is a 326-residue protein sequence, read N- to C-terminus: Glycerol-3-phosphate dehydrogenase [NAD(P)+] (326 aa).

The NADPH site is built by W13, R33, and K107. 3 residues coordinate sn-glycerol 3-phosphate: K107, G135, and S137. A139 lines the NADPH pocket. Sn-glycerol 3-phosphate-binding residues include K190, D243, S253, R254, and N255. The active-site Proton acceptor is the K190. NADPH is bound at residue R254. Residues L273 and E275 each coordinate NADPH.

It belongs to the NAD-dependent glycerol-3-phosphate dehydrogenase family.

It is found in the cytoplasm. The enzyme catalyses sn-glycerol 3-phosphate + NAD(+) = dihydroxyacetone phosphate + NADH + H(+). It catalyses the reaction sn-glycerol 3-phosphate + NADP(+) = dihydroxyacetone phosphate + NADPH + H(+). Its pathway is membrane lipid metabolism; glycerophospholipid metabolism. Catalyzes the reduction of the glycolytic intermediate dihydroxyacetone phosphate (DHAP) to sn-glycerol 3-phosphate (G3P), the key precursor for phospholipid synthesis. The chain is Glycerol-3-phosphate dehydrogenase [NAD(P)+] from Brucella ovis (strain ATCC 25840 / 63/290 / NCTC 10512).